Reading from the N-terminus, the 335-residue chain is Proline racemase (335 aa).

Cys91 acts as the Proton acceptor in catalysis. Cys255 (proton donor) is an active-site residue.

The protein belongs to the proline racemase family. As to quaternary structure, homodimer.

It catalyses the reaction L-proline = D-proline. In terms of biological role, catalyzes the reversible interconversion of L- and D-proline. Plays an important role in the regulation of intra- and extracellular amino acid pools, allowing the bacterium to profit from host precursors and enzymatic pathways. Strong B-cell mitogen. The sequence is that of Proline racemase from Clostridioides difficile (strain 630) (Peptoclostridium difficile).